Reading from the N-terminus, the 412-residue chain is Candidapepsin-2 (412 aa).

The segment at residues 1 to 25 is a signal peptide (or 18, or 21); sequence MTTIAIFTKNVLLAIAFALFAQGAA. Positions 26 to 61 are cleaved as a propeptide — activation peptide; that stretch reads IPDPAKRDDNPGFVALDFEVTRKPLDVNATSELSKR. N-linked (GlcNAc...) asparagine glycosylation occurs at N53. One can recognise a Peptidase A1 domain in the interval 75–383; sequence YGIRVSVGSN…LDKETVLSRS (309 aa). The active site involves D93. An intrachain disulfide couples C108 to C113. Residue D273 is part of the active site. A disulfide bridge links C311 with C345.

The protein belongs to the peptidase A1 family. O-glycosylated.

It localises to the secreted. It catalyses the reaction Preferential cleavage at the carboxyl of hydrophobic amino acids, but fails to cleave 15-Leu-|-Tyr-16, 16-Tyr-|-Leu-17 and 24-Phe-|-Phe-25 of insulin B chain. Activates trypsinogen, and degrades keratin.. The protein is Candidapepsin-2 (SAPP2) of Candida parapsilosis (Yeast).